The following is a 122-amino-acid chain: Proteasome assembly chaperone 3 (122 aa).

At methionine 1 the chain carries N-acetylmethionine.

The protein belongs to the PSMG3 family. Homodimer. Interacts directly with alpha and beta subunits of the 20S proteasome but dissociates before the formation of half-proteasomes, probably upon recruitment of POMP. Interacts with PSMG4.

Functionally, chaperone protein which promotes assembly of the 20S proteasome. May cooperate with PSMG1-PSMG2 heterodimers to orchestrate the correct assembly of proteasomes. This is Proteasome assembly chaperone 3 (Psmg3) from Mus musculus (Mouse).